A 119-amino-acid polypeptide reads, in one-letter code: Protein yippee-like 3 (119 aa).

Residues 19–116 (RRYSCVHCRA…IELSHMIKDN (98 aa)) enclose the Yippee domain. Positions 23, 26, 79, and 82 each coordinate Zn(2+).

This sequence belongs to the yippee family.

The protein resides in the nucleus. Its subcellular location is the nucleolus. May be involved in proliferation and apoptosis in myeloid precursor cells. In Oryzias latipes (Japanese rice fish), this protein is Protein yippee-like 3 (ypel3).